Reading from the N-terminus, the 473-residue chain is Ribosomal RNA small subunit methyltransferase F (473 aa).

Residues 124-130, glutamate 148, aspartate 175, and aspartate 193 each bind S-adenosyl-L-methionine; that span reads ASAPGSK. Residue cysteine 246 is the Nucleophile of the active site.

It belongs to the class I-like SAM-binding methyltransferase superfamily. RsmB/NOP family.

The protein localises to the cytoplasm. It carries out the reaction cytidine(1407) in 16S rRNA + S-adenosyl-L-methionine = 5-methylcytidine(1407) in 16S rRNA + S-adenosyl-L-homocysteine + H(+). Specifically methylates the cytosine at position 1407 (m5C1407) of 16S rRNA. The protein is Ribosomal RNA small subunit methyltransferase F of Aliivibrio fischeri (strain ATCC 700601 / ES114) (Vibrio fischeri).